The following is a 342-amino-acid chain: N-acetyl-gamma-glutamyl-phosphate reductase (342 aa).

Cys-146 is a catalytic residue.

Belongs to the NAGSA dehydrogenase family. Type 1 subfamily.

Its subcellular location is the cytoplasm. The catalysed reaction is N-acetyl-L-glutamate 5-semialdehyde + phosphate + NADP(+) = N-acetyl-L-glutamyl 5-phosphate + NADPH + H(+). It participates in amino-acid biosynthesis; L-arginine biosynthesis; N(2)-acetyl-L-ornithine from L-glutamate: step 3/4. Its function is as follows. Catalyzes the NADPH-dependent reduction of N-acetyl-5-glutamyl phosphate to yield N-acetyl-L-glutamate 5-semialdehyde. The chain is N-acetyl-gamma-glutamyl-phosphate reductase from Streptomyces avermitilis (strain ATCC 31267 / DSM 46492 / JCM 5070 / NBRC 14893 / NCIMB 12804 / NRRL 8165 / MA-4680).